Reading from the N-terminus, the 152-residue chain is UPF0266 membrane protein plu2700 (152 aa).

3 helical membrane passes run 6–26 (IALTGLIVLMLAFAVYDEFVV), 45–65 (IDALIFIILILIVVYNNITVY), and 67–87 (SRLTTYLLLFTILVTIYIAYI).

This sequence belongs to the UPF0266 family.

Its subcellular location is the cell inner membrane. The sequence is that of UPF0266 membrane protein plu2700 from Photorhabdus laumondii subsp. laumondii (strain DSM 15139 / CIP 105565 / TT01) (Photorhabdus luminescens subsp. laumondii).